A 284-amino-acid chain; its full sequence is Sulfotransferase 4A1 (284 aa).

Phosphothreonine is present on residues threonine 8, threonine 11, and threonine 205.

This sequence belongs to the sulfotransferase 1 family. As to expression, expressed in brain, cerebellum and hypothalamus. Not detected in pancreas, liver, lung, intestine, kidney, uterus, adrenal gland, thymus, spleen, epididymis, testicle, and heart.

Its subcellular location is the cytoplasm. Functionally, atypical sulfotransferase family member with very low affinity for 3'-phospho-5'-adenylyl sulfate (PAPS) and very low catalytic activity towards L-triiodothyronine, thyroxine, estrone, p-nitrophenol, 2-naphthylamine, and 2-beta-naphthol. May have a role in the metabolism of drugs and neurotransmitters in the CNS. The protein is Sulfotransferase 4A1 (Sult4a1) of Mus musculus (Mouse).